We begin with the raw amino-acid sequence, 166 residues long: 3-isopropylmalate dehydratase small subunit 2 (166 aa).

Belongs to the LeuD family. LeuD type 2 subfamily. Heterodimer of LeuC and LeuD.

The enzyme catalyses (2R,3S)-3-isopropylmalate = (2S)-2-isopropylmalate. Its pathway is amino-acid biosynthesis; L-leucine biosynthesis; L-leucine from 3-methyl-2-oxobutanoate: step 2/4. Functionally, catalyzes the isomerization between 2-isopropylmalate and 3-isopropylmalate, via the formation of 2-isopropylmaleate. The chain is 3-isopropylmalate dehydratase small subunit 2 (leuD2) from Thermotoga maritima (strain ATCC 43589 / DSM 3109 / JCM 10099 / NBRC 100826 / MSB8).